The chain runs to 215 residues: Nucleoside triphosphate pyrophosphatase (215 aa).

The active-site Proton acceptor is Asp80.

The protein belongs to the Maf family. Requires a divalent metal cation as cofactor.

The protein localises to the cytoplasm. It carries out the reaction a ribonucleoside 5'-triphosphate + H2O = a ribonucleoside 5'-phosphate + diphosphate + H(+). The catalysed reaction is a 2'-deoxyribonucleoside 5'-triphosphate + H2O = a 2'-deoxyribonucleoside 5'-phosphate + diphosphate + H(+). In terms of biological role, nucleoside triphosphate pyrophosphatase. May have a dual role in cell division arrest and in preventing the incorporation of modified nucleotides into cellular nucleic acids. The sequence is that of Nucleoside triphosphate pyrophosphatase from Leifsonia xyli subsp. xyli (strain CTCB07).